Reading from the N-terminus, the 331-residue chain is 6-phosphogluconolactonase (331 aa).

Belongs to the cycloisomerase 2 family.

The enzyme catalyses 6-phospho-D-glucono-1,5-lactone + H2O = 6-phospho-D-gluconate + H(+). Its pathway is carbohydrate degradation; pentose phosphate pathway; D-ribulose 5-phosphate from D-glucose 6-phosphate (oxidative stage): step 2/3. In terms of biological role, catalyzes the hydrolysis of 6-phosphogluconolactone to 6-phosphogluconate. This is 6-phosphogluconolactonase from Salmonella agona (strain SL483).